A 515-amino-acid chain; its full sequence is Envelope glycoprotein (515 aa).

The N-terminal stretch at 1-33 is a signal peptide; that stretch reads MPKERRSRRRPQPIIRWVSLTLTLLALCQPIQT. Residues 34-436 are Extracellular-facing; sequence WRCSLSLGNQ…GLTAWVRETI (403 aa). Asparagine 129 and asparagine 203 each carry an N-linked (GlcNAc...) asparagine; by host glycan. Residues 212–215 carry the CXXC motif; that stretch reads CAIC. 3 disulfide bridges follow: cysteine 212–cysteine 215, cysteine 212–cysteine 392, and cysteine 384–cysteine 391. N-linked (GlcNAc...) asparagine; by host glycans are attached at residues asparagine 230, asparagine 251, asparagine 256, asparagine 271, and asparagine 287. The segment at 304-324 is fusion peptide; the sequence is VAALTLGLALSVGLTGINVAV. 2 coiled-coil regions span residues 330 to 376 and 388 to 420; these read QRLT…WLYI and NEPC…DWQW. Asparagine 351 is a glycosylation site (N-linked (GlcNAc...) asparagine; by host). Positions 365-381 are immunosuppression; the sequence is AQNRRGLDWLYIRLGFQ. Positions 384 to 392 match the CX6CC motif; sequence CPTINEPCC. Asparagine 398 carries an N-linked (GlcNAc...) asparagine; by host glycan. A helical membrane pass occupies residues 437–457; that stretch reads HSVLSLFLLALFLLFLAPCLI. Cysteine 455 carries S-palmitoyl cysteine; by host lipidation. Over 458-515 the chain is Cytoplasmic; sequence KCLTSRLLKLLRQAPHFPEISFPPKPDSDYQALLPSAPEIYSHLSPTKPDYINLRPCP.

As to quaternary structure, the mature envelope protein (Env) consists of a trimer of SU-TM heterodimers attached by a labile interchain disulfide bond. In terms of processing, specific enzymatic cleavages in vivo yield mature proteins. Envelope glycoproteins are synthesized as an inactive precursor that is N-glycosylated and processed likely by host cell furin or by a furin-like protease in the Golgi to yield the mature SU and TM proteins. The cleavage site between SU and TM requires the minimal sequence [KR]-X-[KR]-R. The CXXC motif is highly conserved across a broad range of retroviral envelope proteins. It is thought to participate in the formation of a labile disulfide bond possibly with the CX6CC motif present in the transmembrane protein. Isomerization of the intersubunit disulfide bond to an SU intrachain disulfide bond is thought to occur upon receptor recognition in order to allow membrane fusion. Post-translationally, the transmembrane protein is palmitoylated.

It is found in the virion membrane. Its subcellular location is the host cell membrane. The surface protein (SU) attaches the virus to the host cell by binding to its receptor. This interaction triggers the refolding of the transmembrane protein (TM) and is thought to activate its fusogenic potential by unmasking its fusion peptide. Fusion occurs at the host cell plasma membrane. In terms of biological role, the transmembrane protein (TM) acts as a class I viral fusion protein. Under the current model, the protein has at least 3 conformational states: pre-fusion native state, pre-hairpin intermediate state, and post-fusion hairpin state. During viral and target cell membrane fusion, the coiled coil regions (heptad repeats) assume a trimer-of-hairpins structure, positioning the fusion peptide in close proximity to the C-terminal region of the ectodomain. The formation of this structure appears to drive apposition and subsequent fusion of viral and target cell membranes. Membranes fusion leads to delivery of the nucleocapsid into the cytoplasm. The sequence is that of Envelope glycoprotein (env) from Bos taurus (Bovine).